Consider the following 104-residue polypeptide: L-rhamnose mutarotase (104 aa).

Substrate is bound at residue Tyr-18. The active-site Proton donor is the His-22. Residues Tyr-41 and Trp-76–Trp-77 contribute to the substrate site.

Belongs to the rhamnose mutarotase family. As to quaternary structure, homodimer.

The protein resides in the cytoplasm. It carries out the reaction alpha-L-rhamnose = beta-L-rhamnose. It participates in carbohydrate metabolism; L-rhamnose metabolism. Functionally, involved in the anomeric conversion of L-rhamnose. The polypeptide is L-rhamnose mutarotase (Bacillus subtilis (strain 168)).